Reading from the N-terminus, the 262-residue chain is Flap endonuclease Xni (262 aa).

Residue Asp-105 participates in Mg(2+) binding. The 5'-3' exonuclease domain maps to 164–251 (SQFLDLMALA…NINLKDFRAN (88 aa)). Leu-172, Ala-173, Pro-181, Ile-183, and Ile-186 together coordinate K(+). The interaction with DNA stretch occupies residues 185 to 190 (GIGPKS).

Belongs to the Xni family. Mg(2+) is required as a cofactor. K(+) serves as cofactor.

Functionally, has flap endonuclease activity. During DNA replication, flap endonucleases cleave the 5'-overhanging flap structure that is generated by displacement synthesis when DNA polymerase encounters the 5'-end of a downstream Okazaki fragment. The protein is Flap endonuclease Xni of Shewanella putrefaciens (strain CN-32 / ATCC BAA-453).